We begin with the raw amino-acid sequence, 259 residues long: Apolipoprotein A-I (259 aa).

A signal peptide spans 1–18 (MKAAVLAVALVFLTGCQA). Repeat copies occupy residues 67 to 88 (LNLLDNWDTLGSTVGRLQEQLG) and 89 to 110 (PVTQEFWANLEKETDWLRNEMN). Residues 67–259 (LNLLDNWDTL…IDEAKKKLNA (193 aa)) are 10 X approximate tandem repeats. Met-109 carries the methionine sulfoxide modification. Residues 111 to 121 (KDLENVKQKMQ) form a 3; half-length repeat. Copy 4 of the repeat occupies 122-143 (PHLDEFQEKWNEEVEAYRQKLE). The 5; truncated repeat unit spans residues 144–161 (PLGTELHKNAKEMQRHLK). Copy 6 of the repeat occupies 162–183 (VVAEEFRDRMRVNADALRAKFG). One copy of the 7; truncated repeat lies at 184–203 (LYSDQMRENLAQRLTEIKNH). Position 189 is a methionine sulfoxide (Met-189). Copy 8 of the repeat occupies 204–225 (PTLIEYHTKASDHLKTLGEKAK). One copy of the 9; half-length repeat lies at 226-236 (PALDDLGQGLM). Met-236 is subject to Methionine sulfoxide. Repeat 10 spans residues 237 to 259 (PVLEAWKAKIMSMIDEAKKKLNA).

The protein belongs to the apolipoprotein A1/A4/E family. As to quaternary structure, homodimer. Interacts with APOA1BP and CLU. Component of a sperm activating protein complex (SPAP), consisting of APOA1, an immunoglobulin heavy chain, an immunoglobulin light chain and albumin. Interacts with NDRG1. Interacts with SCGB3A2. Interacts with NAXE and YJEFN3. Post-translationally, glycosylated. In terms of processing, palmitoylated. Phosphorylation sites are present in the extracellular medium. In terms of tissue distribution, major protein of plasma HDL, also found in chylomicrons.

It localises to the secreted. In terms of biological role, participates in the reverse transport of cholesterol from tissues to the liver for excretion by promoting cholesterol efflux from tissues and by acting as a cofactor for the lecithin cholesterol acyltransferase (LCAT). As part of the SPAP complex, activates spermatozoa motility. The chain is Apolipoprotein A-I (Apoa1) from Rattus norvegicus (Rat).